The chain runs to 131 residues: Transcription antitermination protein NusB (131 aa).

It belongs to the NusB family.

Functionally, involved in transcription antitermination. Required for transcription of ribosomal RNA (rRNA) genes. Binds specifically to the boxA antiterminator sequence of the ribosomal RNA (rrn) operons. The sequence is that of Transcription antitermination protein NusB from Campylobacter fetus subsp. fetus (strain 82-40).